The chain runs to 442 residues: tRNA-2-methylthio-N(6)-dimethylallyladenosine synthase (442 aa).

The region spanning 3–118 (KKVFIKTFGC…LPELLNARAA (116 aa)) is the MTTase N-terminal domain. Residues C12, C49, C81, C155, C159, and C162 each contribute to the [4Fe-4S] cluster site. A Radical SAM core domain is found at 141–374 (RVEGSSAFVS…QAVINNNIKD (234 aa)). A TRAM domain is found at 377–440 (DERVGTVQRL…TFTLRGEVVV (64 aa)).

This sequence belongs to the methylthiotransferase family. MiaB subfamily. Monomer. It depends on [4Fe-4S] cluster as a cofactor.

It is found in the cytoplasm. The catalysed reaction is N(6)-dimethylallyladenosine(37) in tRNA + (sulfur carrier)-SH + AH2 + 2 S-adenosyl-L-methionine = 2-methylsulfanyl-N(6)-dimethylallyladenosine(37) in tRNA + (sulfur carrier)-H + 5'-deoxyadenosine + L-methionine + A + S-adenosyl-L-homocysteine + 2 H(+). Its function is as follows. Catalyzes the methylthiolation of N6-(dimethylallyl)adenosine (i(6)A), leading to the formation of 2-methylthio-N6-(dimethylallyl)adenosine (ms(2)i(6)A) at position 37 in tRNAs that read codons beginning with uridine. The polypeptide is tRNA-2-methylthio-N(6)-dimethylallyladenosine synthase (Delftia acidovorans (strain DSM 14801 / SPH-1)).